Here is an 830-residue protein sequence, read N- to C-terminus: Receptor-like protein kinase HERK 1 (830 aa).

The first 24 residues, 1–24 (MGIEKFETFILISTISILLCICHG), serve as a signal peptide directing secretion. The Extracellular portion of the chain corresponds to 25 to 405 (FTPVDNYLIN…SSSSSKSNLG (381 aa)). N-linked (GlcNAc...) asparagine glycosylation is found at Asn-40, Asn-146, Asn-217, Asn-280, and Asn-381. Residues 406-426 (LIVGSAIGSLLAVVFLGSCFV) form a helical membrane-spanning segment. Topologically, residues 427-830 (LYKKRKRGQD…FSQLVKSEGR (404 aa)) are cytoplasmic. A Protein kinase domain is found at 485-758 (FDESRNIGVG…GDVLWNLEYA (274 aa)). ATP is bound by residues 491-499 (IGVGGFGKV) and Lys-513. Asp-609 acts as the Proton acceptor in catalysis.

This sequence belongs to the protein kinase superfamily. Ser/Thr protein kinase family. Post-translationally, autophosphorylated. As to expression, expressed in most vegetative tissues, including leaves, stems and roots, especially in cell elongation regions.

It is found in the cell membrane. Its function is as follows. Receptor-like protein kinase required for cell elongation during vegetative growth, mostly in a brassinosteroid-(BR-) independent manner. The protein is Receptor-like protein kinase HERK 1 (HERK1) of Arabidopsis thaliana (Mouse-ear cress).